The primary structure comprises 352 residues: MSKITVKSPGRVNLIGEHTDYTYGYVMPMAIDLYTIITAEKYDKVQLYSEHFNEEKTFTLDNLTKEGSWIDYVKGVLWVLIQEGYKIGGLKGKITGDLPLGAGLSSSASFEVGILEVLNQLYNLNIDPLKKALLAKKAENEFVGVPCGILDQFAVVFGKKDNVIFLDTQTLQYEYIPFPKDVSVLVFYTGVKRELASSEYAERKRIAEESLRILGKESSKEVTEKDLGKLPPLHRKFFSYIVRENARVLEVRDALKEGDIEKVGKILTTAHWDLAENYRVSCEELDFFVKKAMELGAYGARLTGAGFGGSAIALVDKDKAKTIGDAILREYLAKFSWKAKYFVVKPSDGVGV.

Glu17–Asp20 contributes to the substrate binding site. Residues Ser49 and Gly101–Ser107 contribute to the ATP site. Positions 107 and 139 each coordinate Mg(2+). Asp151 functions as the Proton acceptor in the catalytic mechanism. Position 200 (Tyr200) interacts with substrate.

This sequence belongs to the GHMP kinase family. GalK subfamily. In terms of assembly, monomer.

Its subcellular location is the cytoplasm. It carries out the reaction alpha-D-galactose + ATP = alpha-D-galactose 1-phosphate + ADP + H(+). Its pathway is carbohydrate metabolism; galactose metabolism. Its function is as follows. Catalyzes the transfer of the gamma-phosphate of ATP to D-galactose to form alpha-D-galactose-1-phosphate (Gal-1-P). Is very specific for its substrate, since it is not able to use D-glucose, D-fructose, D-mannose, 2-deoxy-D-glucose, and D-glucosamine as substrates. This chain is Galactokinase, found in Pyrococcus furiosus (strain ATCC 43587 / DSM 3638 / JCM 8422 / Vc1).